The following is a 942-amino-acid chain: Lambda-carrageenase (942 aa).

The signal sequence occupies residues 1–25 (MKIKILSAMVASSLLIGCVIPTVKA).

In terms of assembly, monomer.

The protein resides in the secreted. The catalysed reaction is Endohydrolysis of (1-&gt;4)-beta-linkages in the backbone of lambda-carrageenan, resulting in the tetrasaccharide alpha-D-Galp2,6S2-(1-&gt;3)-beta-D-Galp2S-(1-&gt;4)-alpha-D-Galp2,6S2-(1-&gt;3)-D-Galp2S.. In terms of biological role, hydrolyzes lambda-carrageenan with inversion of anomeric configuration. Does not hydrolyze iota- and kappa-carrageenans, agarose or porphyran. In Pseudoalteromonas carrageenovora (Alteromonas carrageenovora), this protein is Lambda-carrageenase.